Reading from the N-terminus, the 152-residue chain is ALK and LTK ligand 1 (152 aa).

An N-terminal signal peptide occupies residues 1–23 (MRAEKRWHILLSMILLLITSSQC). Cystine bridges form between C113–C149 and C127–C136.

This sequence belongs to the ALKAL family. Expressed at low level in the notochord and iridophore stripes, the eye and the swim bladder.

It localises to the secreted. The protein localises to the cell membrane. Its function is as follows. Cytokine that acts as a physiological ligand for receptor tyrosine kinases LTK and ALK. Required for iridophore development in the adult eye by acting as a receptor for LTK. This is ALK and LTK ligand 1 from Danio rerio (Zebrafish).